Reading from the N-terminus, the 106-residue chain is Cell cycle protein GpsB (106 aa).

Residues 34 to 67 adopt a coiled-coil conformation; sequence LDVIIQDYDNFKQEIDRLKAENEKLKKSTPAVEQ. A disordered region spans residues 55-83; that stretch reads NEKLKKSTPAVEQSRSRSQQPPTSQVNYD. Residues 70-79 are compositionally biased toward low complexity; sequence SRSQQPPTSQ.

It belongs to the GpsB family. Forms polymers through the coiled coil domains. Interacts with PBP1, MreC and EzrA.

Its subcellular location is the cytoplasm. In terms of biological role, divisome component that associates with the complex late in its assembly, after the Z-ring is formed, and is dependent on DivIC and PBP2B for its recruitment to the divisome. Together with EzrA, is a key component of the system that regulates PBP1 localization during cell cycle progression. Its main role could be the removal of PBP1 from the cell pole after pole maturation is completed. Also contributes to the recruitment of PBP1 to the division complex. Not essential for septum formation. The sequence is that of Cell cycle protein GpsB from Oceanobacillus iheyensis (strain DSM 14371 / CIP 107618 / JCM 11309 / KCTC 3954 / HTE831).